The sequence spans 100 residues: Aspartyl/glutamyl-tRNA(Asn/Gln) amidotransferase subunit C (100 aa).

Belongs to the GatC family. Heterotrimer of A, B and C subunits.

It catalyses the reaction L-glutamyl-tRNA(Gln) + L-glutamine + ATP + H2O = L-glutaminyl-tRNA(Gln) + L-glutamate + ADP + phosphate + H(+). The catalysed reaction is L-aspartyl-tRNA(Asn) + L-glutamine + ATP + H2O = L-asparaginyl-tRNA(Asn) + L-glutamate + ADP + phosphate + 2 H(+). Its function is as follows. Allows the formation of correctly charged Asn-tRNA(Asn) or Gln-tRNA(Gln) through the transamidation of misacylated Asp-tRNA(Asn) or Glu-tRNA(Gln) in organisms which lack either or both of asparaginyl-tRNA or glutaminyl-tRNA synthetases. The reaction takes place in the presence of glutamine and ATP through an activated phospho-Asp-tRNA(Asn) or phospho-Glu-tRNA(Gln). The polypeptide is Aspartyl/glutamyl-tRNA(Asn/Gln) amidotransferase subunit C (Staphylococcus carnosus (strain TM300)).